We begin with the raw amino-acid sequence, 118 residues long: MASQSQGIQQLLQAEKRAAEKVSEARKRKNRRLKQAKEEAQAEVEQYRLQREKEFKAKEAAALGSHGSCSTEVEKDTQEKMTILQTYFQQNRDEVLDNLLAFVCDIRPEIHENYRING.

An N-acetylalanine modification is found at Ala-2. Positions 19–42 (AEKVSEARKRKNRRLKQAKEEAQA) are disordered.

The protein belongs to the V-ATPase G subunit family. As to quaternary structure, V-ATPase is a heteromultimeric enzyme made up of two complexes: the ATP-hydrolytic V1 complex and the proton translocation V0 complex. The V1 complex consists of three catalytic AB heterodimers that form a heterohexamer, three peripheral stalks each consisting of EG heterodimers, one central rotor including subunits D and F, and the regulatory subunits C and H. The proton translocation complex V0 consists of the proton transport subunit a, a ring of proteolipid subunits c9c'', rotary subunit d, subunits e and f, and the accessory subunits ATP6AP1/Ac45 and ATP6AP2/PRR. In terms of tissue distribution, brain, heart, kidney and spleen.

It is found in the apical cell membrane. Subunit of the V1 complex of vacuolar(H+)-ATPase (V-ATPase), a multisubunit enzyme composed of a peripheral complex (V1) that hydrolyzes ATP and a membrane integral complex (V0) that translocates protons. V-ATPase is responsible for acidifying and maintaining the pH of intracellular compartments and in some cell types, is targeted to the plasma membrane, where it is responsible for acidifying the extracellular environment. In aerobic conditions, involved in intracellular iron homeostasis, thus triggering the activity of Fe(2+) prolyl hydroxylase (PHD) enzymes, and leading to HIF1A hydroxylation and subsequent proteasomal degradation. This is V-type proton ATPase subunit G 1 (ATP6V1G1) from Bos taurus (Bovine).